A 340-amino-acid chain; its full sequence is Methionine import ATP-binding protein MetN (340 aa).

In terms of domain architecture, ABC transporter spans 5 to 243 (IEFRGVTKSF…PQTTTARRFV (239 aa)). Residue 40 to 47 (GYSGAGKS) participates in ATP binding.

Belongs to the ABC transporter superfamily. Methionine importer (TC 3.A.1.24) family. The complex is composed of two ATP-binding proteins (MetN), two transmembrane proteins (MetI) and a solute-binding protein (MetQ).

The protein resides in the cell membrane. It catalyses the reaction L-methionine(out) + ATP + H2O = L-methionine(in) + ADP + phosphate + H(+). The enzyme catalyses D-methionine(out) + ATP + H2O = D-methionine(in) + ADP + phosphate + H(+). Its function is as follows. Part of the ABC transporter complex MetNIQ involved in methionine import. Responsible for energy coupling to the transport system. This Leifsonia xyli subsp. xyli (strain CTCB07) protein is Methionine import ATP-binding protein MetN.